Reading from the N-terminus, the 242-residue chain is 3-deoxy-manno-octulosonate cytidylyltransferase (242 aa).

This sequence belongs to the KdsB family.

The protein localises to the cytoplasm. It catalyses the reaction 3-deoxy-alpha-D-manno-oct-2-ulosonate + CTP = CMP-3-deoxy-beta-D-manno-octulosonate + diphosphate. It functions in the pathway nucleotide-sugar biosynthesis; CMP-3-deoxy-D-manno-octulosonate biosynthesis; CMP-3-deoxy-D-manno-octulosonate from 3-deoxy-D-manno-octulosonate and CTP: step 1/1. The protein operates within bacterial outer membrane biogenesis; lipopolysaccharide biosynthesis. In terms of biological role, activates KDO (a required 8-carbon sugar) for incorporation into bacterial lipopolysaccharide in Gram-negative bacteria. In Anaeromyxobacter sp. (strain K), this protein is 3-deoxy-manno-octulosonate cytidylyltransferase.